We begin with the raw amino-acid sequence, 248 residues long: MMKELLMNNMLNDVPTPWAMYFQDSATPNMEGIMELHNNVVFYLIIMLCFVTYMLYNISTVYNKSAVAYKYMNHGQFIEMVWTTFPAVMLLIMAFPSFMLLYICDEVMAPAMTIKAMGLQWYWKYEYSDFMDEKGETIEFESYIIPEDLLEDGQLRMLDVDASVVCPVDTHIRFIVTSADVIHDFCMPSLGIKIDAAPGRLNQTSALIQREGVYYGQCSELCGVMHSAMPIKIEVVPTADFLTWIDEQ.

The Mitochondrial intermembrane segment spans residues 1–39 (MMKELLMNNMLNDVPTPWAMYFQDSATPNMEGIMELHNN). A helical transmembrane segment spans residues 40-56 (VVFYLIIMLCFVTYMLY). Topologically, residues 57-87 (NISTVYNKSAVAYKYMNHGQFIEMVWTTFPA) are mitochondrial matrix. A helical transmembrane segment spans residues 88-104 (VMLLIMAFPSFMLLYIC). Over 105–248 (DEVMAPAMTI…ADFLTWIDEQ (144 aa)) the chain is Mitochondrial intermembrane. Cu cation-binding residues include His183, Cys218, Glu220, Cys222, His226, and Met229. Position 220 (Glu220) interacts with Mg(2+).

Belongs to the cytochrome c oxidase subunit 2 family. As to quaternary structure, component of the cytochrome c oxidase (complex IV, CIV), a multisubunit enzyme composed of a catalytic core of 3 subunits and several supernumerary subunits. The complex exists as a monomer or a dimer and forms supercomplexes (SCs) in the inner mitochondrial membrane with ubiquinol-cytochrome c oxidoreductase (cytochrome b-c1 complex, complex III, CIII). Cu cation is required as a cofactor.

It localises to the mitochondrion inner membrane. The catalysed reaction is 4 Fe(II)-[cytochrome c] + O2 + 8 H(+)(in) = 4 Fe(III)-[cytochrome c] + 2 H2O + 4 H(+)(out). In terms of biological role, component of the cytochrome c oxidase, the last enzyme in the mitochondrial electron transport chain which drives oxidative phosphorylation. The respiratory chain contains 3 multisubunit complexes succinate dehydrogenase (complex II, CII), ubiquinol-cytochrome c oxidoreductase (cytochrome b-c1 complex, complex III, CIII) and cytochrome c oxidase (complex IV, CIV), that cooperate to transfer electrons derived from NADH and succinate to molecular oxygen, creating an electrochemical gradient over the inner membrane that drives transmembrane transport and the ATP synthase. Cytochrome c oxidase is the component of the respiratory chain that catalyzes the reduction of oxygen to water. Electrons originating from reduced cytochrome c in the intermembrane space (IMS) are transferred via the dinuclear copper A center (CU(A)) of subunit 2 and heme A of subunit 1 to the active site in subunit 1, a binuclear center (BNC) formed by heme A3 and copper B (CU(B)). The BNC reduces molecular oxygen to 2 water molecules using 4 electrons from cytochrome c in the IMS and 4 protons from the mitochondrial matrix. The chain is Cytochrome c oxidase subunit 2 (COX2) from Brettanomyces naardenensis (Yeast).